A 258-amino-acid polypeptide reads, in one-letter code: Hydroxyacylglutathione hydrolase (258 aa).

Zn(2+) contacts are provided by His-55, His-57, Asp-59, His-60, His-115, Asp-132, and His-170.

This sequence belongs to the metallo-beta-lactamase superfamily. Glyoxalase II family. In terms of assembly, monomer. Zn(2+) serves as cofactor.

The catalysed reaction is an S-(2-hydroxyacyl)glutathione + H2O = a 2-hydroxy carboxylate + glutathione + H(+). The protein operates within secondary metabolite metabolism; methylglyoxal degradation; (R)-lactate from methylglyoxal: step 2/2. Its function is as follows. Thiolesterase that catalyzes the hydrolysis of S-D-lactoyl-glutathione to form glutathione and D-lactic acid. This is Hydroxyacylglutathione hydrolase from Shewanella denitrificans (strain OS217 / ATCC BAA-1090 / DSM 15013).